A 130-amino-acid polypeptide reads, in one-letter code: Glycine cleavage system H protein (130 aa).

A Lipoyl-binding domain is found at Lys22–Glu103. An N6-lipoyllysine modification is found at Lys63.

The protein belongs to the GcvH family. In terms of assembly, the glycine cleavage system is composed of four proteins: P, T, L and H. It depends on (R)-lipoate as a cofactor.

In terms of biological role, the glycine cleavage system catalyzes the degradation of glycine. The H protein shuttles the methylamine group of glycine from the P protein to the T protein. The protein is Glycine cleavage system H protein of Clostridium botulinum (strain Okra / Type B1).